The sequence spans 155 residues: Protein SREK1IP1 (155 aa).

A CCHC-type zinc finger spans residues alanine 13–asparagine 30. The tract at residues aspartate 43–aspartate 155 is disordered. Positions glutamate 58 to lysine 74 are enriched in basic and acidic residues. Residues lysine 75–histidine 93 are compositionally biased toward basic residues. The span at serine 94–lysine 103 shows a compositional bias: basic and acidic residues. Basic residues predominate over residues alanine 104–arginine 137. A compositionally biased stretch (low complexity) spans serine 140–aspartate 155.

Functionally, possible splicing regulator involved in the control of cellular survival. This chain is Protein SREK1IP1 (srek1ip1), found in Xenopus tropicalis (Western clawed frog).